The following is a 1789-amino-acid chain: Protein sprint (1789 aa).

Disordered stretches follow at residues 53 to 120 (TTAN…AHPP), 140 to 190 (TTTA…DLAN), 218 to 237 (PLWN…HPTG), 261 to 317 (QRMH…QAGL), 329 to 378 (LNNN…DADD), and 401 to 460 (RRSR…PCDL). The span at 82–114 (SINNNKNNNISNKNNNNNNNNNNNINNNNNNNN) shows a compositional bias: low complexity. Polar residues predominate over residues 140 to 149 (TTTANQLQQQ). Positions 176–185 (PSEEDGDTDA) are enriched in acidic residues. Residues 223–233 (RNGNGSTTTHC) show a composition bias toward polar residues. A compositionally biased stretch (low complexity) spans 295–317 (NNNNINNNHNGQQSQKSQQQAGL). Polar residues predominate over residues 337–361 (QPGSMTPASNRTGLDSNQNQKQNLN). A compositionally biased stretch (low complexity) spans 409–418 (QSRTSLVSSS). The segment covering 428–445 (TSSEDDEEEPVEAEDEGE) has biased composition (acidic residues). Positions 473-566 (WFLPGIQRSG…ELPVQLMLPR (94 aa)) constitute an SH2 domain. 7 disordered regions span residues 632-689 (FFSD…SGGQ), 744-787 (TAPE…SANG), 852-918 (GECK…ILES), 969-1006 (DLLA…QSLL), 1040-1067 (AAED…QGSP), 1094-1123 (RSQM…MLQP), and 1138-1160 (PKPK…KRAR). Residues 639–649 (KPPPTGAPPLP) are compositionally biased toward pro residues. A compositionally biased stretch (low complexity) spans 671–686 (TPSDTTNSSLSSFTTS). Over residues 857–868 (TLSSQGSSSNDS) the composition is skewed to polar residues. Positions 903–914 (AGKESQHYKESD) are enriched in basic and acidic residues. The segment covering 974 to 984 (TPSTPTPTQQS) has biased composition (low complexity). Polar residues-rich tracts occupy residues 994–1006 (TATP…QSLL) and 1048–1065 (TTPT…SKQG). Low complexity predominate over residues 1143–1154 (SQQQQQSQQQQQ). Residues 1531–1673 (RSEDIQLLAQ…LKTFMASEGE (143 aa)) enclose the VPS9 domain. Positions 1689-1777 (CSSVLRVIIP…CMLAYKRIDA (89 aa)) constitute a Ras-associating domain.

This sequence belongs to the RIN (Ras interaction/interference) family. As to expression, in late cellular blastoderm embryos, it is expressed in the posterior end. Then, as development proceeds, it is expressed in the developing midgut, amnioserosa and in a specific subset of CNS neurons. Isoform 1 is expressed earlier in developing midgut and amnioserosa, but is not expressed in the CNS.

Functionally, potential Ras effector protein. May function as a guanine nucleotide exchange (GEF), by exchanging bound GDP for free GTP. The chain is Protein sprint (spri) from Drosophila melanogaster (Fruit fly).